We begin with the raw amino-acid sequence, 808 residues long: Protein NLP5 (808 aa).

Positions 56–68 are enriched in polar residues; sequence PTQDTSNSLSQMY. A disordered region spans residues 56–83; that stretch reads PTQDTSNSLSQMYGQDCPERSSLEDQNQ. The RWP-RK domain maps to 536–617; that stretch reads NRVTEKKRTK…IDSVEGVSGH (82 aa). The tract at residues 660–680 is disordered; the sequence is SPGSSCSHSSSCSSETQVIKE. Over residues 663–673 the composition is skewed to low complexity; it reads SSCSHSSSCSS. In terms of domain architecture, PB1 spans 710–793; sequence FLRVKVSYEE…QTIKLLLQLS (84 aa).

The protein resides in the nucleus. In terms of biological role, probable transcription factor. This is Protein NLP5 (NLP5) from Arabidopsis thaliana (Mouse-ear cress).